Here is a 235-residue protein sequence, read N- to C-terminus: Proteasome subunit alpha type-2 (235 aa).

This sequence belongs to the peptidase T1A family. In terms of assembly, the 26S proteasome consists of a 20S proteasome core and two 19S regulatory subunits. The 20S proteasome core is composed of 28 subunits that are arranged in four stacked rings, resulting in a barrel-shaped structure. The two end rings are each formed by seven alpha subunits, and the two central rings are each formed by seven beta subunits. The catalytic chamber with the active sites is on the inside of the barrel.

The protein resides in the cytoplasm. It localises to the nucleus. The proteasome is a multicatalytic proteinase complex which is characterized by its ability to cleave peptides with Arg, Phe, Tyr, Leu, and Glu adjacent to the leaving group at neutral or slightly basic pH. The proteasome has an ATP-dependent proteolytic activity. The polypeptide is Proteasome subunit alpha type-2 (PAB1) (Oryza sativa subsp. indica (Rice)).